The following is a 176-amino-acid chain: ATP synthase subunit b (176 aa).

Residues 14–34 (STTLGTMIVVSGAFLILMLLL) traverse the membrane as a helical segment.

It belongs to the ATPase B chain family. As to quaternary structure, F-type ATPases have 2 components, F(1) - the catalytic core - and F(0) - the membrane proton channel. F(1) has five subunits: alpha(3), beta(3), gamma(1), delta(1), epsilon(1). F(0) has three main subunits: a(1), b(2) and c(10-14). The alpha and beta chains form an alternating ring which encloses part of the gamma chain. F(1) is attached to F(0) by a central stalk formed by the gamma and epsilon chains, while a peripheral stalk is formed by the delta and b chains.

The protein resides in the cell membrane. F(1)F(0) ATP synthase produces ATP from ADP in the presence of a proton or sodium gradient. F-type ATPases consist of two structural domains, F(1) containing the extramembraneous catalytic core and F(0) containing the membrane proton channel, linked together by a central stalk and a peripheral stalk. During catalysis, ATP synthesis in the catalytic domain of F(1) is coupled via a rotary mechanism of the central stalk subunits to proton translocation. Functionally, component of the F(0) channel, it forms part of the peripheral stalk, linking F(1) to F(0). This Enterococcus faecalis (strain ATCC 700802 / V583) protein is ATP synthase subunit b.